Consider the following 31-residue polypeptide: Cytochrome b6-f complex subunit 6 (31 aa).

Residues 4–24 form a helical membrane-spanning segment; that stretch reads ITSYFGFLLAALTITSALFIG.

It belongs to the PetL family. In terms of assembly, the 4 large subunits of the cytochrome b6-f complex are cytochrome b6, subunit IV (17 kDa polypeptide, PetD), cytochrome f and the Rieske protein, while the 4 small subunits are PetG, PetL, PetM and PetN. The complex functions as a dimer.

It localises to the plastid. The protein resides in the chloroplast thylakoid membrane. Its function is as follows. Component of the cytochrome b6-f complex, which mediates electron transfer between photosystem II (PSII) and photosystem I (PSI), cyclic electron flow around PSI, and state transitions. PetL is important for photoautotrophic growth as well as for electron transfer efficiency and stability of the cytochrome b6-f complex. The chain is Cytochrome b6-f complex subunit 6 from Solanum tuberosum (Potato).